The primary structure comprises 257 residues: Phosphonates import ATP-binding protein PhnC (257 aa).

In terms of domain architecture, ABC transporter spans 4-248 (IEFKDVNKVY…VFNDIYGRKL (245 aa)). ATP is bound at residue 37 to 44 (GLSGAGKS).

The protein belongs to the ABC transporter superfamily. Phosphonates importer (TC 3.A.1.9.1) family. In terms of assembly, the complex is composed of two ATP-binding proteins (PhnC), two transmembrane proteins (PhnE) and a solute-binding protein (PhnD).

The protein resides in the cell membrane. The enzyme catalyses phosphonate(out) + ATP + H2O = phosphonate(in) + ADP + phosphate + H(+). Functionally, part of the ABC transporter complex PhnCDE involved in phosphonates import. Responsible for energy coupling to the transport system. The sequence is that of Phosphonates import ATP-binding protein PhnC from Staphylococcus haemolyticus (strain JCSC1435).